Here is a 173-residue protein sequence, read N- to C-terminus: N-alpha-acetyltransferase 20 (173 aa).

An N-acetyltransferase domain is found at T2 to P151.

It belongs to the acetyltransferase family. ARD1 subfamily.

Functionally, seems to be involved in N-acetylation. The polypeptide is N-alpha-acetyltransferase 20 (nat5) (Dictyostelium discoideum (Social amoeba)).